The following is a 90-amino-acid chain: MATRIRLKRLGMKKAPFYRVVVADSRSPRDGRFIEEIGYYNPTKEPAILQIDEEKAIKWLSSGAQPSDTVKALLNKAGILDKMAEKKAQA.

It belongs to the bacterial ribosomal protein bS16 family.

The polypeptide is Small ribosomal subunit protein bS16 (Heliobacterium modesticaldum (strain ATCC 51547 / Ice1)).